Reading from the N-terminus, the 487-residue chain is Probable glutamate receptor (487 aa).

Residues methionine 1–glutamine 23 form the signal peptide. Topologically, residues threonine 24–lysine 169 are extracellular. N-linked (GlcNAc...) asparagine glycosylation occurs at asparagine 104. The chain crosses the membrane as a helical span at residues glutamate 170–alanine 190. Topologically, residues arginine 191 to arginine 235 are cytoplasmic. The helical transmembrane segment at valine 236 to phenylalanine 256 threads the bilayer. Residues threonine 257 to alanine 419 lie on the Extracellular side of the membrane. A helical transmembrane segment spans residues leucine 420–valine 440. At glutamate 441–alanine 487 the chain is on the cytoplasmic side.

The protein belongs to the glutamate-gated ion channel (TC 1.A.10.1) family.

It is found in the cell membrane. The protein localises to the postsynaptic cell membrane. In terms of biological role, receptor for glutamate. L-glutamate acts as an excitatory neurotransmitter at many synapses in the central nervous system. The postsynaptic actions of Glu are mediated by a variety of receptors that are named according to their selective agonists. This chain is Probable glutamate receptor (KBP), found in Gallus gallus (Chicken).